Here is a 209-residue protein sequence, read N- to C-terminus: Thiamine-phosphate synthase (209 aa).

Residues 41-45 (QLREK) and N73 each bind 4-amino-2-methyl-5-(diphosphooxymethyl)pyrimidine. Mg(2+) contacts are provided by D74 and D93. S112 serves as a coordination point for 4-amino-2-methyl-5-(diphosphooxymethyl)pyrimidine. 138–140 (TGT) is a 2-[(2R,5Z)-2-carboxy-4-methylthiazol-5(2H)-ylidene]ethyl phosphate binding site. K141 serves as a coordination point for 4-amino-2-methyl-5-(diphosphooxymethyl)pyrimidine. 2-[(2R,5Z)-2-carboxy-4-methylthiazol-5(2H)-ylidene]ethyl phosphate is bound by residues G168 and 188 to 189 (VS).

This sequence belongs to the thiamine-phosphate synthase family. It depends on Mg(2+) as a cofactor.

It catalyses the reaction 2-[(2R,5Z)-2-carboxy-4-methylthiazol-5(2H)-ylidene]ethyl phosphate + 4-amino-2-methyl-5-(diphosphooxymethyl)pyrimidine + 2 H(+) = thiamine phosphate + CO2 + diphosphate. The enzyme catalyses 2-(2-carboxy-4-methylthiazol-5-yl)ethyl phosphate + 4-amino-2-methyl-5-(diphosphooxymethyl)pyrimidine + 2 H(+) = thiamine phosphate + CO2 + diphosphate. The catalysed reaction is 4-methyl-5-(2-phosphooxyethyl)-thiazole + 4-amino-2-methyl-5-(diphosphooxymethyl)pyrimidine + H(+) = thiamine phosphate + diphosphate. Its pathway is cofactor biosynthesis; thiamine diphosphate biosynthesis; thiamine phosphate from 4-amino-2-methyl-5-diphosphomethylpyrimidine and 4-methyl-5-(2-phosphoethyl)-thiazole: step 1/1. Its function is as follows. Condenses 4-methyl-5-(beta-hydroxyethyl)thiazole monophosphate (THZ-P) and 2-methyl-4-amino-5-hydroxymethyl pyrimidine pyrophosphate (HMP-PP) to form thiamine monophosphate (TMP). This Alkaliphilus oremlandii (strain OhILAs) (Clostridium oremlandii (strain OhILAs)) protein is Thiamine-phosphate synthase.